A 59-amino-acid polypeptide reads, in one-letter code: Ferredoxin (59 aa).

4Fe-4S ferredoxin-type domains are found at residues 2–30 (GKIT…LEVN) and 31–59 (DHVE…LKVE). [4Fe-4S] cluster contacts are provided by C12, C15, C18, C22, C41, C44, C47, and C51.

Requires [4Fe-4S] cluster as cofactor.

Ferredoxins are iron-sulfur proteins that transfer electrons in a wide variety of metabolic reactions. The polypeptide is Ferredoxin (Entamoeba histolytica (strain ATCC 30459 / HM-1:IMSS / ABRM)).